We begin with the raw amino-acid sequence, 251 residues long: Ubiquinone/menaquinone biosynthesis C-methyltransferase UbiE (251 aa).

Residues Thr74, Asp95, and 123–124 (NA) contribute to the S-adenosyl-L-methionine site.

The protein belongs to the class I-like SAM-binding methyltransferase superfamily. MenG/UbiE family.

It catalyses the reaction a 2-demethylmenaquinol + S-adenosyl-L-methionine = a menaquinol + S-adenosyl-L-homocysteine + H(+). The catalysed reaction is a 2-methoxy-6-(all-trans-polyprenyl)benzene-1,4-diol + S-adenosyl-L-methionine = a 5-methoxy-2-methyl-3-(all-trans-polyprenyl)benzene-1,4-diol + S-adenosyl-L-homocysteine + H(+). It participates in quinol/quinone metabolism; menaquinone biosynthesis; menaquinol from 1,4-dihydroxy-2-naphthoate: step 2/2. Its pathway is cofactor biosynthesis; ubiquinone biosynthesis. Methyltransferase required for the conversion of demethylmenaquinol (DMKH2) to menaquinol (MKH2) and the conversion of 2-polyprenyl-6-methoxy-1,4-benzoquinol (DDMQH2) to 2-polyprenyl-3-methyl-6-methoxy-1,4-benzoquinol (DMQH2). This chain is Ubiquinone/menaquinone biosynthesis C-methyltransferase UbiE, found in Shewanella baltica (strain OS155 / ATCC BAA-1091).